The primary structure comprises 327 residues: Malate dehydrogenase (327 aa).

Position 12–18 (12–18 (GAAGQIG)) interacts with NAD(+). The substrate site is built by Arg-93 and Arg-99. NAD(+)-binding positions include Asn-106, Gln-113, and 130 to 132 (VGN). Substrate-binding residues include Asn-132 and Arg-163. His-188 (proton acceptor) is an active-site residue.

Belongs to the LDH/MDH superfamily. MDH type 2 family.

It catalyses the reaction (S)-malate + NAD(+) = oxaloacetate + NADH + H(+). In terms of biological role, catalyzes the reversible oxidation of malate to oxaloacetate. The sequence is that of Malate dehydrogenase from Cupriavidus pinatubonensis (strain JMP 134 / LMG 1197) (Cupriavidus necator (strain JMP 134)).